We begin with the raw amino-acid sequence, 130 residues long: Small ribosomal subunit protein uS9 (130 aa).

The segment at 98–130 (LKRAGMLTRDPRMKERKKPGLKGARRSPQFSKR) is disordered. Positions 111 to 130 (KERKKPGLKGARRSPQFSKR) are enriched in basic residues.

This sequence belongs to the universal ribosomal protein uS9 family.

This Macrococcus caseolyticus (strain JCSC5402) (Macrococcoides caseolyticum) protein is Small ribosomal subunit protein uS9.